We begin with the raw amino-acid sequence, 1482 residues long: Glutamate receptor ionotropic, NMDA 2B (1482 aa).

Positions 1–26 (MKPSAECCSPKFWLVLAVLAVSGSKA) are cleaved as a signal peptide. Residues 27–557 (RSQKSPPSIG…SAFLEPFSAD (531 aa)) lie on the Extracellular side of the membrane. N74 carries N-linked (GlcNAc...) asparagine glycosylation. C86 and C321 are oxidised to a cystine. 2 residues coordinate Zn(2+): H127 and E284. N-linked (GlcNAc...) asparagine glycosylation is found at N341, N348, N444, and N491. Cystine bridges form between C429-C456 and C436-C457. The L-glutamate site is built by T514 and R519. A glycan (N-linked (GlcNAc...) asparagine) is linked at N542. Residues 558–576 (VWVMMFVMLLIVSAVAVFV) traverse the membrane as a helical segment. At 577–603 (FEYFSPVGYNRCLADGREPGGPSFTIG) the chain is on the cytoplasmic side. The segment at residues 604 to 623 (KAIWLLWGLVFNNSVPVQNP) is an intramembrane region (discontinuously helical). The tract at residues 604–623 (KAIWLLWGLVFNNSVPVQNP) is pore-forming. The Cytoplasmic portion of the chain corresponds to 624–630 (KGTTSKI). A helical membrane pass occupies residues 631–646 (MVSVWAFFAVIFLASY). Over 647–817 (TANLAAFMIQ…VMSSQLDIDN (171 aa)) the chain is Extracellular. N-linked (GlcNAc...) asparagine glycosylation is present at N688. 3 residues coordinate L-glutamate: S690, T691, and D732. A disulfide bond links C746 and C801. A helical membrane pass occupies residues 818 to 837 (MAGVFYMLGAAMALSLITFI). Over 838-1482 (CEHLFYWQFR…EKLSSIESDV (645 aa)) the chain is Cytoplasmic. Phosphoserine occurs at positions 882, 886, 917, and 920. Phosphotyrosine is present on residues Y962 and Y1039. Phosphoserine occurs at positions 1058, 1061, and 1064. 2 positions are modified to phosphotyrosine: Y1109 and Y1133. S1143 carries the phosphoserine modification. Residue Y1155 is modified to Phosphotyrosine. The disordered stretch occupies residues 1161–1194 (DFKRDSVSGGGPCTNRSHLKHGTGEKHGVVGGVP). A phosphoserine mark is found at S1255 and S1259. The interval 1269–1301 (PVAVTSNASSTKYPQSPTNSKAQKKNRNKLRRQ) is disordered. A compositionally biased stretch (polar residues) spans 1272–1289 (VTSNASSTKYPQSPTNSK). A compositionally biased stretch (basic residues) spans 1290–1301 (AQKKNRNKLRRQ). The tract at residues 1292 to 1304 (KKNRNKLRRQHSY) is interaction with DAPK1. S1303 is subject to Phosphoserine. At Y1472 the chain carries Phosphotyrosine. A PDZ-binding motif is present at residues 1480 to 1482 (SDV).

This sequence belongs to the glutamate-gated ion channel (TC 1.A.10.1) family. NR2B/GRIN2B subfamily. Heterotetramer. Forms heterotetrameric channels composed of two GluN1/zeta subunits (GRIN1), and two identical GluN2/epsilon subunits (GRIN2A, GRIN2B, GRIN2C or GRIN2D) or GluN3 subunits (GRIN3A or GRIN3B) (in vitro). Can also form heterotetrameric channels that contain at least two GluN1 subunits and at least two different GluN2 subunits (or a combination of one GluN2 and one GluN3 subunits) (in vitro). In vivo, the subunit composition may depend on the expression levels of the different subunits. Found in a complex with GRIN1, GRIN3A and PPP2CB. Found in a complex with GRIN1 and GRIN3B. Interacts with MAGI3. Interacts with HIP1 and NETO1. Interacts with PDZ domains of PATJ, DLG3 and DLG4. Interacts with DAPK1. Found in a complex with GRIN1 and PRR7. Interacts with PRR7. Interacts with CAMK2A. Interacts with ARC; preventing ARC oligomerization. Interacts with TMEM25. Interacts (via the extreme C-terminus) with FRMPD2 (via the second PDZ domain); the interaction is direct and is likely to promote NMDAR-mediated neural signal transmission. Interacts with FAM81A; the interaction facilitates condensate formation via liquid-liquid phase separation. Post-translationally, phosphorylated on tyrosine residues. Phosphorylation at Ser-1303 by DAPK1 enhances synaptic NMDA receptor channel activity. Expressed in the hippocampus including the dentate gyrus (at protein level). Detected in adult olfactory bulb, brain cortex, hippocampus, striatum, thalamus, superior colliculus, with much lower levels in inferior colliculus, midbrain and cerebellum.

Its subcellular location is the cell membrane. It is found in the postsynaptic cell membrane. The protein localises to the late endosome. The protein resides in the lysosome. It localises to the cytoplasm. Its subcellular location is the cytoskeleton. It catalyses the reaction Ca(2+)(in) = Ca(2+)(out). The catalysed reaction is Na(+)(in) = Na(+)(out). It carries out the reaction K(+)(in) = K(+)(out). With respect to regulation, NMDA glutamate receptor activity is inhibited by micromolar levels of zinc ions. NMDA glutamate receptor activity is inhibited by ifenprodil. Its function is as follows. Component of N-methyl-D-aspartate (NMDA) receptors (NMDARs) that function as heterotetrameric, ligand-gated cation channels with high calcium permeability and voltage-dependent block by Mg(2+). Participates in synaptic plasticity for learning and memory formation by contributing to the long-term depression (LTD) of hippocampus membrane currents. Channel activation requires binding of the neurotransmitter L-glutamate to the GluN2 subunit, glycine or D-serine binding to the GluN1 subunit, plus membrane depolarization to eliminate channel inhibition by Mg(2+). NMDARs mediate simultaneously the potasium efflux and the influx of calcium and sodium. Each GluN2 subunit confers differential attributes to channel properties, including activation, deactivation and desensitization kinetics, pH sensitivity, Ca2(+) permeability, and binding to allosteric modulators. In concert with DAPK1 at extrasynaptic sites, acts as a central mediator for stroke damage. Its phosphorylation at Ser-1303 by DAPK1 enhances synaptic NMDA receptor channel activity inducing injurious Ca2+ influx through them, resulting in an irreversible neuronal death. The sequence is that of Glutamate receptor ionotropic, NMDA 2B from Rattus norvegicus (Rat).